The following is a 473-amino-acid chain: ATP-dependent 6-phosphofructokinase 1 (473 aa).

Ser-71 bears the Phosphoserine mark. Residues Gly-102, 165–166 (RG), and 190–193 (GDGS) contribute to the ATP site. Asp-191 lines the Mg(2+) pocket. Substrate-binding positions include 219 to 221 (TID), 264 to 266 (MGR), Glu-320, and 376 to 379 (YMIR). Asp-221 acts as the Proton acceptor in catalysis.

This sequence belongs to the phosphofructokinase type A (PFKA) family. PPi-dependent PFK group II subfamily. Atypical ATP-dependent clade 'X' sub-subfamily. In terms of assembly, homotetramer. Mg(2+) serves as cofactor. As to expression, expressed in roots, leaves, stems and flowers.

It is found in the cytoplasm. The enzyme catalyses beta-D-fructose 6-phosphate + ATP = beta-D-fructose 1,6-bisphosphate + ADP + H(+). The protein operates within carbohydrate degradation; glycolysis; D-glyceraldehyde 3-phosphate and glycerone phosphate from D-glucose: step 3/4. Its activity is regulated as follows. Allosterically activated by AMP. Its function is as follows. Catalyzes the phosphorylation of D-fructose 6-phosphate to fructose 1,6-bisphosphate by ATP, the first committing step of glycolysis. The chain is ATP-dependent 6-phosphofructokinase 1 from Arabidopsis thaliana (Mouse-ear cress).